A 525-amino-acid chain; its full sequence is tRNA(Ile)-lysidine synthase (525 aa).

An ATP-binding site is contributed by 32–37 (SGGRDS).

This sequence belongs to the tRNA(Ile)-lysidine synthase family.

It localises to the cytoplasm. The enzyme catalyses cytidine(34) in tRNA(Ile2) + L-lysine + ATP = lysidine(34) in tRNA(Ile2) + AMP + diphosphate + H(+). Its function is as follows. Ligates lysine onto the cytidine present at position 34 of the AUA codon-specific tRNA(Ile) that contains the anticodon CAU, in an ATP-dependent manner. Cytidine is converted to lysidine, thus changing the amino acid specificity of the tRNA from methionine to isoleucine. This Psychrobacter sp. (strain PRwf-1) protein is tRNA(Ile)-lysidine synthase.